We begin with the raw amino-acid sequence, 147 residues long: Hemoglobin subunit delta (147 aa).

In terms of domain architecture, Globin spans histidine 3 to histidine 147. Position 51 is a phosphoserine (serine 51). Heme b contacts are provided by histidine 64 and histidine 93.

This sequence belongs to the globin family. In terms of assembly, heterotetramer of two delta chains and two alpha chains. As to expression, red blood cells.

This Gorilla gorilla gorilla (Western lowland gorilla) protein is Hemoglobin subunit delta (HBD).